The following is a 398-amino-acid chain: Acetate kinase 2 (398 aa).

Mg(2+) is bound at residue asparagine 7. Lysine 14 is a binding site for ATP. A substrate-binding site is contributed by arginine 91. Catalysis depends on aspartate 148, which acts as the Proton donor/acceptor. Residues histidine 208–glycine 212, aspartate 283–arginine 285, and glycine 331–asparagine 335 contribute to the ATP site. Residue glutamate 384 coordinates Mg(2+).

Belongs to the acetokinase family. As to quaternary structure, homodimer. Mg(2+) serves as cofactor. Requires Mn(2+) as cofactor.

Its subcellular location is the cytoplasm. The catalysed reaction is acetate + ATP = acetyl phosphate + ADP. It functions in the pathway metabolic intermediate biosynthesis; acetyl-CoA biosynthesis; acetyl-CoA from acetate: step 1/2. Catalyzes the formation of acetyl phosphate from acetate and ATP. Can also catalyze the reverse reaction. The sequence is that of Acetate kinase 2 from Clostridium perfringens (strain 13 / Type A).